We begin with the raw amino-acid sequence, 692 residues long: SH3 domain-containing protein 21 (692 aa).

Residues 1–60 are disordered; the sequence is MVQSELQLQPRAGGRAEAASWGDRGNDKGGFGNPDMPSVSPGPQRPPKLSSLAYDSPPDY. In terms of domain architecture, SH3 spans 65-126; sequence SHPEAYRVLF…PDNFVLPPPP (62 aa). Disordered regions lie at residues 132 to 501, 536 to 605, and 672 to 692; these read PRKV…EVLP, PKGG…SQET, and VMQG…TQTY. Over residues 177 to 186 the composition is skewed to basic and acidic residues; sequence PSRDSQKLTS. Over residues 210-220 the composition is skewed to polar residues; sequence TQTPQQRSVSS. Composition is skewed to basic and acidic residues over residues 378-396, 490-501, and 542-582; these read VSTR…EALQ, NEERLLRGEVLP, and SKEE…KEEV. The stretch at 628–678 forms a coiled coil; that stretch reads SLRGEVESLRRALELMGVQLERKLTDIWEELKSEKEQRQRLEVQVMQGTQK. The span at 673–692 shows a compositional bias: polar residues; sequence MQGTQKSQTPRIIHAQTQTY.

The polypeptide is SH3 domain-containing protein 21 (SH3D21) (Macaca fascicularis (Crab-eating macaque)).